The sequence spans 906 residues: Protein translocase subunit SecA (906 aa).

ATP is bound by residues Q86, 104 to 108 (GEGKT), and D499. A disordered region spans residues 863 to 885 (PVVSRIDPKDRNPDDPTSWGRVS). Positions 890, 892, 901, and 902 each coordinate Zn(2+).

It belongs to the SecA family. Monomer and homodimer. Part of the essential Sec protein translocation apparatus which comprises SecA, SecYEG and auxiliary proteins SecDF-YajC and YidC. It depends on Zn(2+) as a cofactor.

The protein resides in the cell inner membrane. Its subcellular location is the cytoplasm. The catalysed reaction is ATP + H2O + cellular proteinSide 1 = ADP + phosphate + cellular proteinSide 2.. Part of the Sec protein translocase complex. Interacts with the SecYEG preprotein conducting channel. Has a central role in coupling the hydrolysis of ATP to the transfer of proteins into and across the cell membrane, serving both as a receptor for the preprotein-SecB complex and as an ATP-driven molecular motor driving the stepwise translocation of polypeptide chains across the membrane. The sequence is that of Protein translocase subunit SecA from Rickettsia akari (strain Hartford).